The primary structure comprises 216 residues: CASP-like protein 2U1 (216 aa).

A disordered region spans residues 1–30; that stretch reads MKQDTEMGEATNGYIGTPGTVPVSHAGNDS. The Cytoplasmic segment spans residues 1–37; the sequence is MKQDTEMGEATNGYIGTPGTVPVSHAGNDSGMRRMRT. A helical membrane pass occupies residues 38–58; it reads ASILMRLTAMALCVTALVTMV. The Extracellular segment spans residues 59 to 86; the sequence is TDKQTHYFNFASTTIVKTAEYTNVLALK. A helical membrane pass occupies residues 87-107; sequence VFVYTNGVIAGYSLLQALWTI. Residues 108-128 are Cytoplasmic-facing; the sequence is VAKSSYSTSKARLWTTFFLDQ. Residues 129-148 traverse the membrane as a helical segment; the sequence is FIVYVLIGVTGAATEVAYIA. The Extracellular segment spans residues 149-170; sequence EKGESDVAWPKQCNNFGRFCSQ. Residues 171–191 traverse the membrane as a helical segment; that stretch reads VGASVIVCFVAILTLVFLAVL. The Cytoplasmic segment spans residues 192–216; the sequence is SAKQLFIHERPSRTTRKDGYYTSNQ.

It belongs to the Casparian strip membrane proteins (CASP) family. In terms of assembly, homodimer and heterodimers.

It localises to the cell membrane. This is CASP-like protein 2U1 from Marchantia polymorpha (Common liverwort).